The sequence spans 712 residues: Diacylglycerol kinase 2 (712 aa).

Phorbol-ester/DAG-type zinc fingers lie at residues 72–133 (HHQW…AKDC) and 145–208 (RHHW…GDAC). The 142-residue stretch at 338-479 (PDARPLLVFI…RWSVKIVEES (142 aa)) folds into the DAGKc domain.

Belongs to the eukaryotic diacylglycerol kinase family. Monomer. Expressed in rosette and cauline leaves, flowers, siliques and roots. Highly expressed in young leaves and at lower levels in older leaves. In young seedlings, expressed at the root-shoot junction zone and vascular bundles of the cotyledons. In older plants, expressed in root tip, central cylinder, root hair, leaf mesophyll cells and guard cells, sepals, filaments of the anthers, stigma, valves of young and early adult siliques and hilum of seeds.

It is found in the endoplasmic reticulum. It catalyses the reaction a 1,2-diacyl-sn-glycerol + ATP = a 1,2-diacyl-sn-glycero-3-phosphate + ADP + H(+). It carries out the reaction 1-octadecanoyl-2-(5Z,8Z,11Z,14Z-eicosatetraenoyl)-sn-glycerol + ATP = 1-octadecanoyl-2-(5Z,8Z,11Z,14Z-eicosatetraenoyl)-sn-glycero-3-phosphate + ADP + H(+). The catalysed reaction is 1,2-di-(9Z-octadecenoyl)-sn-glycerol + ATP = 1,2-di-(9Z-octadecenoyl)-sn-glycero-3-phosphate + ADP + H(+). Phosphorylates the second messenger diacylglycerol (DAG) to generate phosphatidic acid (PA), another important signaling molecule. PA is required for plant development and responses to abiotic stress and pathogen attack. May be involved in the accumulation of PA during cold stress. Involved in response to freezing stress by modulating the accumulation of PA. Exhibits high specificity for the unsaturated DAG analogs 1-stearoyl-2-arachidonoyl-sn-glycerol (1,2-SAG) and 1,2-dioleoyl-sn-glycerol (1,2-DOG). Exhibits high specificity for 1-palmitoyl, 2-oleoyl-sn-glycerol (1,2 POG), 1-stearoyl, 2-linoleoyl-sn-glycerol (1,2-SLG) and 1-oleoyl, 2-palmitoyl-sn-glycerol (1,2-OPG). Has almost no activity toward 1,2-dioctanoyl-sn-glycerol (1,2-DOCG), 1,2-dipalmitoyl-sn-glycerol (1,2-DPG), 1,2-dimyristoyl-sn-glycerol (1,2-DMG) and 1-oleoyl-2-acetyl-sn-glycerol (1,2-OAG). Functions together with DGK4 in male gametophyte development and biosynthesis of phosphatidylglycerol and phosphatidylinositol in the endoplasmic reticulum (ER). Involved in PA production for pollen grain growth, as well as leaf and root growth. The polypeptide is Diacylglycerol kinase 2 (Arabidopsis thaliana (Mouse-ear cress)).